The following is a 197-amino-acid chain: Holliday junction branch migration complex subunit RuvA (197 aa).

Residues 1–64 are domain I; the sequence is MIGRISGLLL…EDAHLLFGFA (64 aa). Residues 65–142 form a domain II region; the sequence is TEGERQAFRQ…DLGVSAIPGA (78 aa). A flexible linker region spans residues 143 to 153; sequence AGARRPSTMGS. Positions 153-197 are domain III; it reads SDVLNALLSLGYNDREANWAVSQLSVDLSVSDGIRQALKFLSKEK.

This sequence belongs to the RuvA family. In terms of assembly, homotetramer. Forms an RuvA(8)-RuvB(12)-Holliday junction (HJ) complex. HJ DNA is sandwiched between 2 RuvA tetramers; dsDNA enters through RuvA and exits via RuvB. An RuvB hexamer assembles on each DNA strand where it exits the tetramer. Each RuvB hexamer is contacted by two RuvA subunits (via domain III) on 2 adjacent RuvB subunits; this complex drives branch migration. In the full resolvosome a probable DNA-RuvA(4)-RuvB(12)-RuvC(2) complex forms which resolves the HJ.

The protein localises to the cytoplasm. In terms of biological role, the RuvA-RuvB-RuvC complex processes Holliday junction (HJ) DNA during genetic recombination and DNA repair, while the RuvA-RuvB complex plays an important role in the rescue of blocked DNA replication forks via replication fork reversal (RFR). RuvA specifically binds to HJ cruciform DNA, conferring on it an open structure. The RuvB hexamer acts as an ATP-dependent pump, pulling dsDNA into and through the RuvAB complex. HJ branch migration allows RuvC to scan DNA until it finds its consensus sequence, where it cleaves and resolves the cruciform DNA. The protein is Holliday junction branch migration complex subunit RuvA of Nitrosospira multiformis (strain ATCC 25196 / NCIMB 11849 / C 71).